A 566-amino-acid chain; its full sequence is DBIRD complex subunit ZNF326 (566 aa).

2 disordered regions span residues 19–81 (HCGV…ESYD) and 145–180 (RPGF…GRGT). A compositionally biased stretch (gly residues) spans 59–73 (SHGGGGGGGGGGGNR). Positions 156-165 (SYSSYSSFSS) are enriched in low complexity. Positions 240–263 (KRKMMPQPYNKPGGTFIKKPKMTK) match the Bipartite nuclear localization signal motif. The interval 314 to 347 (FGDSKGEGKSEEEEKRRIEARREKQRRRREKNSE) is disordered. The segment covering 317–335 (SKGEGKSEEEEKRRIEARR) has biased composition (basic and acidic residues). C2H2 AKAP95-type zinc fingers lie at residues 359-381 (CSFC…SAAH) and 452-475 (CSAC…SPDH). The segment at 516–566 (PFEINDQAQEQQTEEEDKAEEPAEGEEEEEEEEEEETEEQTDFTLDHTEDN) is disordered. Acidic residues predominate over residues 527-556 (QTEEEDKAEEPAEGEEEEEEEEEEETEEQT).

This sequence belongs to the AKAP95 family. Component of the DBIRD complex.

Its subcellular location is the nucleus. In terms of biological role, core component of the DBIRD complex, a multiprotein complex that acts at the interface between core mRNP particles and RNA polymerase II (RNAPII) and integrates transcript elongation with the regulation of alternative splicing. The protein is DBIRD complex subunit ZNF326 (ZNF326) of Gallus gallus (Chicken).